Consider the following 334-residue polypeptide: Adenine deaminase (334 aa).

Zn(2+) contacts are provided by His-17, His-19, and His-197. The Proton donor role is filled by Glu-200. Position 278 (Asp-278) interacts with Zn(2+). Asp-279 serves as a coordination point for substrate.

The protein belongs to the metallo-dependent hydrolases superfamily. Adenosine and AMP deaminases family. Adenine deaminase type 2 subfamily. Zn(2+) is required as a cofactor.

It catalyses the reaction adenine + H2O + H(+) = hypoxanthine + NH4(+). In terms of biological role, catalyzes the hydrolytic deamination of adenine to hypoxanthine. Plays an important role in the purine salvage pathway and in nitrogen catabolism. The protein is Adenine deaminase of Rhodospirillum rubrum (strain ATCC 11170 / ATH 1.1.1 / DSM 467 / LMG 4362 / NCIMB 8255 / S1).